The primary structure comprises 506 residues: Cytochrome P450 monooxygenase tpcB (506 aa).

Position 450 (C450) interacts with heme.

It belongs to the cytochrome P450 family. It depends on heme as a cofactor.

Its pathway is secondary metabolite biosynthesis; terpenoid biosynthesis. Cytochrome P450 monooxygenase; part of the gene cluster that mediates the biosynthesis of terpestacin. The bifunctional terpene synthase tpcA converts isopentenyl diphosphate (IPP) and dimethylallyl diphosphate (DMAPP) into the sesterterpene preterpestacin I. The C-terminal prenyltransferase (PT) domain of tpcA catalyzes formation of GFPP, whereas the N-terminal terpene cyclase (TC) domain catalyzes the cyclization of GFPP into preterpestacin I. The cytochrome P450 monooxygenase tpcB then hydroxylates preterpestacin I to yield 24-hydroxypreterpstacin I (renamed as preterpestacin II) whereas the cytochrome P450 monooxygenase tpcC further hydroxylates preterpestacin II to yield 16,17-dihydroxypreterpestacin II (renamed as preterpestacin III). Finally, the FAD-dependent monooxygenase tpcD converts preterpestacin III into terpestacin. This chain is Cytochrome P450 monooxygenase tpcB, found in Cochliobolus heterostrophus (strain C5 / ATCC 48332 / race O) (Southern corn leaf blight fungus).